A 308-amino-acid polypeptide reads, in one-letter code: Tyramine--L-glutamate ligase (308 aa).

The region spanning 89–291 (KSLLKSENID…LAELLIKNAN (203 aa)) is the ATP-grasp domain. 115-192 (TKIIESYPVK…QEFIDGENLS (78 aa)) serves as a coordination point for ATP. D252, E264, and N266 together coordinate Mg(2+). 3 residues coordinate Mn(2+): D252, E264, and N266.

Mg(2+) serves as cofactor. Mn(2+) is required as a cofactor.

The catalysed reaction is tyramine + L-glutamate + ATP = gamma-L-glutamyltyramine + ADP + phosphate + H(+). The protein operates within cofactor biosynthesis; methanofuran biosynthesis. Catalyzes the formation of an amide bond between tyramine and the gamma carboxy group of L-glutamate. The enzyme also accepts phenylethylamine in vitro. This Methanocaldococcus jannaschii (strain ATCC 43067 / DSM 2661 / JAL-1 / JCM 10045 / NBRC 100440) (Methanococcus jannaschii) protein is Tyramine--L-glutamate ligase (mfnD).